A 162-amino-acid chain; its full sequence is Cyanate hydratase (162 aa).

Residues R103, E106, and S129 contribute to the active site.

The protein belongs to the cyanase family.

The catalysed reaction is cyanate + hydrogencarbonate + 3 H(+) = NH4(+) + 2 CO2. Functionally, catalyzes the reaction of cyanate with bicarbonate to produce ammonia and carbon dioxide. The chain is Cyanate hydratase from Pyrenophora tritici-repentis (strain Pt-1C-BFP) (Wheat tan spot fungus).